The sequence spans 415 residues: Dihydroorotase (415 aa).

Positions 54 and 56 each coordinate Zn(2+). Residues histidine 56–arginine 58 and asparagine 88 contribute to the substrate site. Lysine 136, histidine 169, histidine 217, and aspartate 278 together coordinate Zn(2+). Residue lysine 136 is modified to N6-carboxylysine. The active site involves aspartate 278. Histidine 282 is a binding site for substrate.

Belongs to the metallo-dependent hydrolases superfamily. DHOase family. Class I DHOase subfamily. Zn(2+) is required as a cofactor.

It catalyses the reaction (S)-dihydroorotate + H2O = N-carbamoyl-L-aspartate + H(+). It participates in pyrimidine metabolism; UMP biosynthesis via de novo pathway; (S)-dihydroorotate from bicarbonate: step 3/3. In terms of biological role, catalyzes the reversible cyclization of carbamoyl aspartate to dihydroorotate. This Thermoplasma volcanium (strain ATCC 51530 / DSM 4299 / JCM 9571 / NBRC 15438 / GSS1) protein is Dihydroorotase.